The primary structure comprises 392 residues: 5-azacytidine-induced protein 2 (392 aa).

Positions 1–197 (MDALVEDDIC…IELQKAKQTD (197 aa)) are homodimerization. Coiled coils occupy residues 40 to 76 (ALVTAYEDIKKRLKDSEKENSLLKKRIRFLEEKLIAR) and 102 to 196 (DRDN…AKQT). The interaction with TBK1 and IKBKE stretch occupies residues 216-257 (SDNMQHAYWELKREMSNLHLVTQVQAELLRKLKTSTAIKKAC). Phosphoserine is present on residues S318 and S353.

Homodimer. Interacts with IKBKE. Interacts with TBK1. Interacts with TICAM1. Interacts with TAX1BP1. Interacts with CALCOCO2. In terms of assembly, (Microbial infection) Interacts with vaccinia virus protein C6. In terms of processing, ubiquitinated via 'Lys-48'-linked polyubiquitination by TRIM38, leading to its degradation. As to expression, widely expressed. Abundant expression seen in the pancreas and testis.

Its subcellular location is the cytoplasm. Functionally, adapter protein which binds TBK1 and IKBKE playing a role in antiviral innate immunity. Activates serine/threonine-protein kinase TBK1 and facilitates its oligomerization. Enhances the phosphorylation of NF-kappa-B p65 subunit RELA by TBK1. Promotes TBK1-induced as well as TNF-alpha or PMA-induced activation of NF-kappa-B. Participates in IFNB promoter activation via TICAM1. In Homo sapiens (Human), this protein is 5-azacytidine-induced protein 2 (AZI2).